Reading from the N-terminus, the 204-residue chain is Ribosomal RNA large subunit methyltransferase E (204 aa).

S-adenosyl-L-methionine is bound by residues glycine 49, tryptophan 51, aspartate 69, asparagine 87, and aspartate 111. Catalysis depends on lysine 151, which acts as the Proton acceptor.

It belongs to the class I-like SAM-binding methyltransferase superfamily. RNA methyltransferase RlmE family.

It localises to the cytoplasm. It carries out the reaction uridine(2552) in 23S rRNA + S-adenosyl-L-methionine = 2'-O-methyluridine(2552) in 23S rRNA + S-adenosyl-L-homocysteine + H(+). In terms of biological role, specifically methylates the uridine in position 2552 of 23S rRNA at the 2'-O position of the ribose in the fully assembled 50S ribosomal subunit. The sequence is that of Ribosomal RNA large subunit methyltransferase E from Nitratidesulfovibrio vulgaris (strain ATCC 29579 / DSM 644 / CCUG 34227 / NCIMB 8303 / VKM B-1760 / Hildenborough) (Desulfovibrio vulgaris).